A 319-amino-acid polypeptide reads, in one-letter code: Ribose-phosphate pyrophosphokinase (319 aa).

Residues 40–42 (DGE) and 99–100 (RQ) each bind ATP. H134 and D174 together coordinate Mg(2+). Residue K198 is part of the active site. D-ribose 5-phosphate-binding positions include R200, D224, and 228–232 (DTAGT).

The protein belongs to the ribose-phosphate pyrophosphokinase family. Class I subfamily. In terms of assembly, homohexamer. Requires Mg(2+) as cofactor.

The protein localises to the cytoplasm. It carries out the reaction D-ribose 5-phosphate + ATP = 5-phospho-alpha-D-ribose 1-diphosphate + AMP + H(+). Its pathway is metabolic intermediate biosynthesis; 5-phospho-alpha-D-ribose 1-diphosphate biosynthesis; 5-phospho-alpha-D-ribose 1-diphosphate from D-ribose 5-phosphate (route I): step 1/1. Functionally, involved in the biosynthesis of the central metabolite phospho-alpha-D-ribosyl-1-pyrophosphate (PRPP) via the transfer of pyrophosphoryl group from ATP to 1-hydroxyl of ribose-5-phosphate (Rib-5-P). In Coxiella burnetii (strain RSA 493 / Nine Mile phase I), this protein is Ribose-phosphate pyrophosphokinase.